The sequence spans 70 residues: Turripeptide Lol9.1 (70 aa).

A signal peptide spans 1 to 20 (MKVYCLLLVLLVGLVSQAHG). The region spanning 21-70 (KPTKRCLSVCSAEYEPVCGSDGKTYANKCHLMTEACWSPTSITLVHEGKC) is the Kazal-like domain. 3 disulfide bridges follow: C26/C56, C30/C49, and C38/C70.

Belongs to the conopeptide P-like superfamily. Expressed by the venom duct.

The protein resides in the secreted. Functionally, acts as a neurotoxin by inhibiting an ion channel. May also act as a serine protease inhibitor, since it possess the kazal serine protease inhibitor signature. This Iotyrris olangoensis (Sea snail) protein is Turripeptide Lol9.1.